The following is a 278-amino-acid chain: 4-deoxy-L-threo-5-hexosulose-uronate ketol-isomerase (278 aa).

4 residues coordinate Zn(2+): H196, H198, E203, and H245.

It belongs to the KduI family. It depends on Zn(2+) as a cofactor.

The enzyme catalyses 5-dehydro-4-deoxy-D-glucuronate = 3-deoxy-D-glycero-2,5-hexodiulosonate. It participates in glycan metabolism; pectin degradation; 2-dehydro-3-deoxy-D-gluconate from pectin: step 4/5. Catalyzes the isomerization of 5-dehydro-4-deoxy-D-glucuronate to 3-deoxy-D-glycero-2,5-hexodiulosonate. The chain is 4-deoxy-L-threo-5-hexosulose-uronate ketol-isomerase from Salmonella dublin (strain CT_02021853).